A 145-amino-acid polypeptide reads, in one-letter code: Small ribosomal subunit protein eS19 (145 aa).

Lys23 carries the N6-acetyllysine modification. Arg67 carries the post-translational modification Omega-N-methylarginine. An N6-acetyllysine mark is found at Lys111 and Lys115. At Lys143 the chain carries N6-succinyllysine.

Belongs to the eukaryotic ribosomal protein eS19 family. Component of the small ribosomal subunit. Part of the small subunit (SSU) processome, composed of more than 70 proteins and the RNA chaperone small nucleolar RNA (snoRNA) U3. Interacts with RPS19BP1; the interaction is direct and mediates the integration of RPS19 in state post-A1. Interacts with RPS19BP1.

The protein resides in the cytoplasm. The protein localises to the nucleus. It is found in the nucleolus. In terms of biological role, component of the small ribosomal subunit. The ribosome is a large ribonucleoprotein complex responsible for the synthesis of proteins in the cell. Required for pre-rRNA processing and maturation of 40S ribosomal subunits. Part of the small subunit (SSU) processome, first precursor of the small eukaryotic ribosomal subunit. During the assembly of the SSU processome in the nucleolus, many ribosome biogenesis factors, an RNA chaperone and ribosomal proteins associate with the nascent pre-rRNA and work in concert to generate RNA folding, modifications, rearrangements and cleavage as well as targeted degradation of pre-ribosomal RNA by the RNA exosome. The protein is Small ribosomal subunit protein eS19 (RPS19) of Oryctolagus cuniculus (Rabbit).